Here is a 556-residue protein sequence, read N- to C-terminus: MTKPTKYRDVEIRAAHGNKLTAKSWLTEAPLRMLMNNLDPQVAENPKELVVYGGIGRAARNWECYDQIVESLTHLNDDETLLVQSGKPVGVFKTHSNAPRVLIANSNLVPHWASWEHFNELDAKGLAMYGQMTAGSWIYIGSQGIVQGTYETFVEAGRQHYDSNLKGRWVLTAGLGGMGGAQPLAATLAGACSLNIECQQVSIDFRLNSRYVDEQATDLDDALARIAKYTQEGKAISIALLGNAAEILPELVKRGVRPDMVTDQTSAHDPLNGYLPAGWTWDEYRARAKTEPAAVIKAAKQSMAVHVKAMLAFQKQGIPTFDYGNNIRQMAQEEGVENAFDFPGFVPAYIRPLFCRGVGPFRWAALSGDPQDIYKTDAKVKELIPDDAHLHNWLDMARERISFQGLPARICWVGLGQRAKLGLAFNEMVRSGELSAPVVIGRDHLDSGSVASPNRETEAMQDGSDAVSDWPLLNALLNTASGATWVSLHHGGGVGMGFSQHSGMVIVCDGTDEAAERIARVLHNDPATGVMRHADAGYQIAIDCAKEQGLNLPMIK.

NAD(+) contacts are provided by residues 53 to 54, Gln131, 177 to 179, Glu197, 243 to 244, 264 to 268, 274 to 275, and Tyr323; these read GG, GMG, NA, QTSAH, and YL. The active site involves Cys411. NAD(+) is bound at residue Gly493.

This sequence belongs to the urocanase family. NAD(+) serves as cofactor.

Its subcellular location is the cytoplasm. The catalysed reaction is 4-imidazolone-5-propanoate = trans-urocanate + H2O. Its pathway is amino-acid degradation; L-histidine degradation into L-glutamate; N-formimidoyl-L-glutamate from L-histidine: step 2/3. Catalyzes the conversion of urocanate to 4-imidazolone-5-propionate. This is Urocanate hydratase from Pseudomonas fluorescens (strain SBW25).